Reading from the N-terminus, the 398-residue chain is Tryptophan synthase beta chain (398 aa).

Lysine 88 carries the N6-(pyridoxal phosphate)lysine modification.

The protein belongs to the TrpB family. In terms of assembly, tetramer of two alpha and two beta chains. Pyridoxal 5'-phosphate is required as a cofactor.

It carries out the reaction (1S,2R)-1-C-(indol-3-yl)glycerol 3-phosphate + L-serine = D-glyceraldehyde 3-phosphate + L-tryptophan + H2O. The protein operates within amino-acid biosynthesis; L-tryptophan biosynthesis; L-tryptophan from chorismate: step 5/5. The beta subunit is responsible for the synthesis of L-tryptophan from indole and L-serine. This is Tryptophan synthase beta chain from Histophilus somni (strain 2336) (Haemophilus somnus).